Reading from the N-terminus, the 283-residue chain is Mitochondrial outer membrane protein porin (283 aa).

Belongs to the eukaryotic mitochondrial porin family.

Its subcellular location is the mitochondrion outer membrane. Forms a channel through the cell membrane that allows diffusion of small hydrophilic molecules. The channel adopts an open conformation at low or zero membrane potential and a closed conformation at potentials above 30-40 mV. The open state has a weak anion selectivity whereas the closed state is cation-selective. The sequence is that of Mitochondrial outer membrane protein porin from Neurospora crassa (strain ATCC 24698 / 74-OR23-1A / CBS 708.71 / DSM 1257 / FGSC 987).